The following is an 84-amino-acid chain: Putative membrane protein insertion efficiency factor (84 aa).

This sequence belongs to the UPF0161 family.

The protein localises to the cell membrane. Functionally, could be involved in insertion of integral membrane proteins into the membrane. This Staphylococcus carnosus (strain TM300) protein is Putative membrane protein insertion efficiency factor.